The sequence spans 317 residues: Ribonuclease Z (317 aa).

Zn(2+) is bound by residues His61, His63, Asp65, His66, His139, Asp210, and His268. Asp65 functions as the Proton acceptor in the catalytic mechanism.

It belongs to the RNase Z family. Homodimer. Requires Zn(2+) as cofactor.

It carries out the reaction Endonucleolytic cleavage of RNA, removing extra 3' nucleotides from tRNA precursor, generating 3' termini of tRNAs. A 3'-hydroxy group is left at the tRNA terminus and a 5'-phosphoryl group is left at the trailer molecule.. Inhibited by high salt concentrations. In terms of biological role, zinc phosphodiesterase, which displays some tRNA 3'-processing endonuclease activity. Probably involved in tRNA maturation, by removing a 3'-trailer from precursor tRNA. Can also catalyze the 5' end cleavage of the 5S rRNA. This is Ribonuclease Z from Haloferax volcanii (strain ATCC 29605 / DSM 3757 / JCM 8879 / NBRC 14742 / NCIMB 2012 / VKM B-1768 / DS2) (Halobacterium volcanii).